The sequence spans 123 residues: uncharacterized protein (123 aa).

Disordered stretches follow at residues 1–21 (MGAPGGKINRPRTELKKKLFK) and 82–123 (EKTA…EDES).

This is an uncharacterized protein from Homo sapiens (Human).